We begin with the raw amino-acid sequence, 486 residues long: UDP-N-acetylmuramate--L-alanine ligase (486 aa).

An ATP-binding site is contributed by 129 to 135; it reads GTHGKTT.

This sequence belongs to the MurCDEF family.

It localises to the cytoplasm. The enzyme catalyses UDP-N-acetyl-alpha-D-muramate + L-alanine + ATP = UDP-N-acetyl-alpha-D-muramoyl-L-alanine + ADP + phosphate + H(+). It participates in cell wall biogenesis; peptidoglycan biosynthesis. Its function is as follows. Cell wall formation. This is UDP-N-acetylmuramate--L-alanine ligase from Vibrio vulnificus (strain YJ016).